Consider the following 413-residue polypeptide: Eukaryotic initiation factor 4A-9 (413 aa).

Positions 40–68 match the Q motif motif; the sequence is HSFDAMGLKENLLRGIYAYGFEKPSAIQQ. The region spanning 71 to 241 is the Helicase ATP-binding domain; the sequence is IVPFCKGLDV…RKFMNKPVRI (171 aa). 84 to 91 serves as a coordination point for ATP; it reads AQSGTGKT. The DEAD box motif lies at 189–192; that stretch reads DEAD. The Helicase C-terminal domain occupies 252 to 413; the sequence is GIKQFYVNVD…ELPANVADLL (162 aa).

Belongs to the DEAD box helicase family. eIF4A subfamily. EIF4F is a multi-subunit complex, the composition of which varies with external and internal environmental conditions. It is composed of at least EIF4A, EIF4E and EIF4G.

The enzyme catalyses ATP + H2O = ADP + phosphate + H(+). In terms of biological role, ATP-dependent RNA helicase which is a subunit of the eIF4F complex involved in cap recognition and is required for mRNA binding to ribosome. In the current model of translation initiation, eIF4A unwinds RNA secondary structures in the 5'-UTR of mRNAs which is necessary to allow efficient binding of the small ribosomal subunit, and subsequent scanning for the initiator codon. The chain is Eukaryotic initiation factor 4A-9 from Nicotiana tabacum (Common tobacco).